The primary structure comprises 330 residues: Polyprenol dehydrogenase (330 aa).

NAD(+)-binding residues include Ile55, Tyr208, Lys212, and Thr245. The active-site Proton acceptor is the Tyr208.

This sequence belongs to the short-chain dehydrogenases/reductases (SDR) family. As to expression, widely expressed. Highly expressed in the pancreas.

It localises to the lipid droplet. Its subcellular location is the secreted. It carries out the reaction a di-trans,poly-cis-polyprenol + NAD(+) = a di-trans,poly-cis-polyprenal + NADH + H(+). The catalysed reaction is a di-trans,poly-cis-polyprenol + NADP(+) = a di-trans,poly-cis-polyprenal + NADPH + H(+). The enzyme catalyses a di-trans,poly-cis-dolichol + NADP(+) = a di-trans,poly-cis-dolichal + NADPH + H(+). It catalyses the reaction a di-trans,poly-cis-dolichol + NAD(+) = a di-trans,poly-cis-dolichal + NADH + H(+). It participates in protein modification; protein glycosylation. In terms of biological role, oxidoreductase that plays a key role in early steps of protein N-linked glycosylation by mediating two non-consecutive steps in dolichol biosynthesis. Acts both as a NAD(+)-dependent dehydrogenase and as a NADPH-dependent reductase during the conversion of polyprenol into dolichol. First catalyzes the NAD(+)-dependent dehydrogenation of polyprenol into polyprenal; polyprenal is then reduced into dolichal by SRD5A3. It then catalyzes the NADPH-dependent reduction of dolichal into dolichol. May also acts as a positive regulator of starvation-induced autophagy. In Homo sapiens (Human), this protein is Polyprenol dehydrogenase.